We begin with the raw amino-acid sequence, 458 residues long: MTSPAKFKKDKEIIAEYDTQVKEIRAQLTEQMKCLDQQCELRVQLLQDLQDFFRKKAEIEMDYSRNLEKLAERFLAKTCSTKDQQFKKDQNVLSPVNCWNLLLNQVKRESRDHTTLSDIYLNNIIPRFVQVSEDSGRLFKKSKEVGQQLQDDLMKVLNELYSVMKTYHMYNADSISAQSKLKEAEKQEEKQIGKSVKQEDRQTPRSPDSTANVRIEEKHVRRSSVKKIEKMKEKRQAKYTENKLKAIKARNEYLLALEATNASVFKYYIHDLSDLIDCCDLGYHASLNRALRTFLSAELNLEQSKHEGLDAIENAVENLDATSDKQRLMEMYNNVFCPPMKFEFQPHMGDMASQLCAQQPVQSELLQRCQQLQSRLSTLKIENEEVKKTMEATLQTIQDIVTVEDFDVSDCFQYSNSMESVKSTVSETFMSKPSIAKRRANQQETEQFYFTVRECYGF.

An F-BAR domain is found at 22 to 324 (KEIRAQLTEQ…AVENLDATSD (303 aa)). The span at 181–203 (LKEAEKQEEKQIGKSVKQEDRQT) shows a compositional bias: basic and acidic residues. A disordered region spans residues 181–214 (LKEAEKQEEKQIGKSVKQEDRQTPRSPDSTANVR). A coiled-coil region spans residues 362 to 400 (QSELLQRCQQLQSRLSTLKIENEEVKKTMEATLQTIQDI).

May interact with SRGAP2; formation of the heterodimer alters SRGAP2 function.

May regulate cell migration and differentiation through interaction with and inhibition of SRGAP2. In contrast to SRGAP2C, it is not able to induce long-lasting changes in synaptic density throughout adulthood. The protein is SLIT-ROBO Rho GTPase-activating protein 2B (SRGAP2B) of Homo sapiens (Human).